The primary structure comprises 333 residues: MSQLITIERHILEQQKNFPEATGELTDLLSDVAFAAKLVRREVVRAGLVDILGFAGSTNVQGEEVKKLDLFANDKIINAIGQHGRFAIMGSEENEGIIIPPKNETGSYALLFDPLDGSSNIDVNVSVGTIFSIYRIKSSDPGNASISDCLQKGSEQVAAGYVIYGSSVVMVYTTGHGVHGFTYDPTIGEFLLSHENITTPGSGKYYSINEGSYAQFNDGTKRYLDYIKEEDPATGRPYSTRYIGSLVADFHRNLLTGGVFVYPPTTKHPSGKLRLMYEANPLAFICEQAGGRATDGHRRILDIDPSELHQRTPLYIGSMADVKVAEEFEQGIR.

4 residues coordinate Mg(2+): glutamate 92, aspartate 113, leucine 115, and aspartate 116. Residues 116 to 119 (DGSS), asparagine 209, tyrosine 242, and lysine 272 each bind substrate. Glutamate 278 is a Mg(2+) binding site.

It belongs to the FBPase class 1 family. Homotetramer. Mg(2+) serves as cofactor.

It localises to the cytoplasm. The enzyme catalyses beta-D-fructose 1,6-bisphosphate + H2O = beta-D-fructose 6-phosphate + phosphate. Its pathway is carbohydrate biosynthesis; Calvin cycle. This is Fructose-1,6-bisphosphatase class 1 from Chlorobium luteolum (strain DSM 273 / BCRC 81028 / 2530) (Pelodictyon luteolum).